A 670-amino-acid chain; its full sequence is Major fimbrium tip subunit FimD (670 aa).

Positions 1–24 are cleaved as a signal peptide; that stretch reads MRTNRILNIICPPILFLLVGFLFG. Residue Cys-25 is the site of N-palmitoyl cysteine attachment. Residue Cys-25 is the site of S-diacylglycerol cysteine attachment. Positions 25 to 50 are excised as a propeptide; it reads CVREDIESDMNETSSLFLQVQPYNQR.

The protein belongs to the FimD family. As to quaternary structure, fimbriae are composed of a major, structural subunit and the minor components FimC, FimD and FimE. Identified in a complex composed of FimC, FimD and FimE (in vitro). The complex interacts with host extracellular matrix proteins, including fibronectin and type I collagen. Interacts with host CXCR4.

Its subcellular location is the fimbrium. It localises to the cell outer membrane. In terms of biological role, probably a component of the fimbrium tip. These long, filamentous pili are attached to the cell surface; they mediate biofilm formation, adhesion onto host cells and onto other bacteria that are part of the oral microbiome. They play an important role in invasion of periodontal tissues and are major virulence factors. FimC, FimD and FimE contribute to interaction with host CXCR4 and thereby down-regulate the TLR2-mediated host immune response. The protein is Major fimbrium tip subunit FimD of Porphyromonas gingivalis (strain ATCC 33277 / DSM 20709 / CIP 103683 / JCM 12257 / NCTC 11834 / 2561).